A 326-amino-acid polypeptide reads, in one-letter code: MYGIEYTTILIFLISIILLNYILKSVTRIMDYIIYRFLLITVALFALTRAQNYGLNLPITGSMDAVYTNSTQEEVFLTSTLCLYYPTEASTQINDGDWKDSLSQMFLTKGWPTGSVYFKEYSNIVDFSVDPQLYCDYNLVLMKYDQSLELDMSELADLILNEWLCNPMDVTLYYYQQSGESNKWISMGSSCTVKVCPLNTQTLGIGCQTTNVDSFEMIAENEKLAIVDVVDGINHKINLTTTTCTIRNCKKLGPRENVAVIQVGGSNVLDITADPTTNPQTERMMRVNWKKWWQVFYTIVDYINQIVQVMSKRSRSLNSAAFYYRV.

An N-terminal signal peptide occupies residues 1–50; it reads MYGIEYTTILIFLISIILLNYILKSVTRIMDYIIYRFLLITVALFALTRA. Asn-69 carries N-linked (GlcNAc...) asparagine; by host glycosylation. Disulfide bonds link Cys-82/Cys-135, Cys-165/Cys-249, Cys-191/Cys-244, and Cys-196/Cys-207. Asp-95 contacts Ca(2+). The interval 165–167 is CNP motif; interaction with ITGAV/ITGB3; the sequence is CNP. 7 residues coordinate Ca(2+): Gln-177, Gly-206, Ser-214, Glu-216, Asp-228, Val-229, and Asp-231. A glycan (N-linked (GlcNAc...) asparagine; by host) is linked at Asn-238. The tract at residues 253–255 is GPR motif; interaction with ITGAX/ITGB2; the sequence is GPR. Asp-301 lines the Ca(2+) pocket.

This sequence belongs to the rotavirus VP7 family. In terms of assembly, homotrimer; disulfide-linked. 2 Ca(2+) ions bound at each subunit interface in the trimer hold the trimer together. Interacts with the intermediate capsid protein VP6. Interacts with the outer capsid protein VP5*. In terms of processing, intramolecular disulfide bonds. Post-translationally, N-glycosylated. The N-terminus is blocked possibly by pyroglutamic acid.

It localises to the virion. The protein localises to the host endoplasmic reticulum lumen. Functionally, calcium-binding protein that interacts with rotavirus cell receptors once the initial attachment by VP4 has been achieved. Rotavirus attachment and entry into the host cell probably involves multiple sequential contacts between the outer capsid proteins VP4 and VP7, and the cell receptors. Following entry into the host cell, low intracellular or intravesicular Ca(2+) concentration probably causes the calcium-stabilized VP7 trimers to dissociate from the virion. This step is probably necessary for the membrane-disrupting entry step and the release of VP4, which is locked onto the virion by VP7. The sequence is that of Outer capsid glycoprotein VP7 from Rotavirus A (strain RVA/Human/United States/Wa/1974/G1P1A[8]) (RV-A).